We begin with the raw amino-acid sequence, 227 residues long: ATP-dependent dethiobiotin synthetase BioD (227 aa).

An ATP-binding site is contributed by 13–18 (NIGKTI). Thr17 is a binding site for Mg(2+). The active site involves Lys38. Ser42 is a substrate binding site. ATP is bound by residues Asp55, 117–120 (EGFG), 177–178 (NH), 206–208 (PFI), and Asn213. Mg(2+) is bound by residues Asp55 and Glu117.

This sequence belongs to the dethiobiotin synthetase family. As to quaternary structure, homodimer. Requires Mg(2+) as cofactor.

It is found in the cytoplasm. It catalyses the reaction (7R,8S)-7,8-diammoniononanoate + CO2 + ATP = (4R,5S)-dethiobiotin + ADP + phosphate + 3 H(+). It functions in the pathway cofactor biosynthesis; biotin biosynthesis; biotin from 7,8-diaminononanoate: step 1/2. Catalyzes a mechanistically unusual reaction, the ATP-dependent insertion of CO2 between the N7 and N8 nitrogen atoms of 7,8-diaminopelargonic acid (DAPA, also called 7,8-diammoniononanoate) to form a ureido ring. This chain is ATP-dependent dethiobiotin synthetase BioD, found in Wigglesworthia glossinidia brevipalpis.